Consider the following 414-residue polypeptide: uncharacterized protein (414 aa).

Belongs to the UbiH/COQ6 family. The cofactor is FAD.

This is an uncharacterized protein from Synechocystis sp. (strain ATCC 27184 / PCC 6803 / Kazusa).